Here is a 527-residue protein sequence, read N- to C-terminus: NAD(P)H-quinone oxidoreductase chain 4 1 (527 aa).

The next 13 membrane-spanning stretches (helical) occupy residues 6–26 (FPWLTAIILFPIVAALLVPII), 36–56 (WFALTVGLIDFALIIYAFYSS), 91–111 (LIILTGFITTLAILAAWPVTF), 113–133 (PKLFYFLMLLMYGGQIAVFAV), 136–156 (LLLFFLVWELELVPVYLILSI), 169–189 (FILYTAGGSLFILVAALTMAF), 212–232 (LFLYAGFLIAYGVKLPIFPLH), 243–263 (TAPAHMLLAGILLKMGGYALL), 275–295 (AVFAPVLVILGVVNIIYAALT), 306–326 (IAYSSISHMGFVLIGMASFTD), 331–351 (GAMLQMISHGLIGASLFFMVG), 387–407 (LALPGMSGFVAELMVFIGFAT), and 417–437 (VIIVFLAAIGVILTPIYLLSM).

Belongs to the complex I subunit 4 family.

It localises to the cellular thylakoid membrane. The enzyme catalyses a plastoquinone + NADH + (n+1) H(+)(in) = a plastoquinol + NAD(+) + n H(+)(out). The catalysed reaction is a plastoquinone + NADPH + (n+1) H(+)(in) = a plastoquinol + NADP(+) + n H(+)(out). NDH-1 shuttles electrons from NAD(P)H, via FMN and iron-sulfur (Fe-S) centers, to quinones in the respiratory chain. The immediate electron acceptor for the enzyme in this species is believed to be plastoquinone. Couples the redox reaction to proton translocation (for every two electrons transferred, four hydrogen ions are translocated across the cytoplasmic membrane), and thus conserves the redox energy in a proton gradient. This chain is NAD(P)H-quinone oxidoreductase chain 4 1, found in Microcystis aeruginosa (strain NIES-843 / IAM M-2473).